The primary structure comprises 183 residues: Cyanate hydratase (183 aa).

Residues arginine 118, glutamate 121, and serine 144 contribute to the active site.

The protein belongs to the cyanase family.

The catalysed reaction is cyanate + hydrogencarbonate + 3 H(+) = NH4(+) + 2 CO2. Functionally, catalyzes the reaction of cyanate with bicarbonate to produce ammonia and carbon dioxide. This is Cyanate hydratase from Cryptococcus neoformans var. neoformans serotype D (strain B-3501A) (Filobasidiella neoformans).